The sequence spans 436 residues: Acetyl-CoA decarbonylase/synthase complex subunit delta 1 (436 aa).

This sequence belongs to the CdhD family. Heterodimer of delta and gamma chains. The ACDS complex is made up of alpha, epsilon, beta, gamma and delta chains with a probable stoichiometry of (alpha(2)epsilon(2))(4)-beta(8)-(gamma(1)delta(1))(8) (Potential).

The protein operates within one-carbon metabolism; methanogenesis from acetate. Its function is as follows. Part of a complex that catalyzes the reversible cleavage of acetyl-CoA, allowing growth on acetate as sole source of carbon and energy. Probably maintains the overall quaternary structure of the ACDS complex. The chain is Acetyl-CoA decarbonylase/synthase complex subunit delta 1 (cdhD1) from Methanosarcina thermophila.